An 848-amino-acid chain; its full sequence is MNSITTPRMGATILRTIAPNVGVLSQVLPLGLRRVYPRGVRWVSSEIQQKDRQAGESNTATDTGVIHKTEQETLLYFDNVYARATSLWNPALWYNVLLRNQSRESVREKIKNLASPPDNPIHGLQLRSTIPVKRDGGVFATFLVPFNYTKAEVNTMIQQNTLNESKNSLFSYFTRATAFPVKGSPWIEDLKRLPSTTVIIKCQGPPLTEEEIYSLFRRYGTIIDIFPPNDTNKHFRVKYRSYRGAICAKNCVSGIEIHNTVLHLQYENVVKGHLIRNFYVTHTRIAIPVTFALLSILAVLIFDPIREFFIEQKITHQYQISWDNRYLKQLKNLTNSTVSTFKNYWGYDSSIISKRHLWEERIEKMDDLKMWLEENNNTFVLIRGPRGSGKHELVMQHTLHNRNNVLYIDCDKLIKSRTDAKFLRNAAGQLGYFPIFPWIDSVTNVLDLMVQGLTGQKSGLSETKESQFRNMLTTSLMAVRRIALKDYQSTINDAGDDVNIKEEDYLQQHPEAKPVIVIDRFEGKADINSFVYKELADWAAMLVQMNIAHVIFLTETVAANQRLSESLPNQVFKTMILSDASKANSRNYVLSELVEHYHKSLKRAKKAEEDEPTEKASPEHSQYDENDPRRYLSEELIQDIDDSLEPLGGRMLDLQAFVRRVKFGELPKEALDKMIEQASEQITQIFLSDKIDPLKSAQAWELIDLLSKNGKVYFHDIVFRPLFKAAPEIGILELENNGLITVSRDRGVLKEIRPFKPLYRAAFQYLIDDEDLKTVLMTRYHLKVINFETGRIKKWEEELRALGKINDQKLFKSRLDYLSKKITTSSDVINHCEDEIKKLSQESNNRRK.

Residues 1–42 constitute a mitochondrion transit peptide; that stretch reads MNSITTPRMGATILRTIAPNVGVLSQVLPLGLRRVYPRGVRW. At 43–284 the chain is on the mitochondrial matrix side; it reads VSSEIQQKDR…IRNFYVTHTR (242 aa). One can recognise an RRM domain in the interval 196–269; it reads TTVIIKCQGP…TVLHLQYENV (74 aa). Residues 285 to 305 traverse the membrane as a helical segment; it reads IAIPVTFALLSILAVLIFDPI. At 306–848 the chain is on the mitochondrial intermembrane side; that stretch reads REFFIEQKIT…LSQESNNRRK (543 aa). The interval 603–627 is disordered; sequence RAKKAEEDEPTEKASPEHSQYDEND. Basic and acidic residues predominate over residues 613 to 627; the sequence is TEKASPEHSQYDEND.

It belongs to the YME2 family.

It localises to the mitochondrion inner membrane. Plays a role in maintaining the mitochondrial genome and in controlling the mtDNA escape. Involved in the regulation of mtDNA nucleotide structure and number. May have a dispensable role in early maturation of pre-rRNA. In Candida glabrata (strain ATCC 2001 / BCRC 20586 / JCM 3761 / NBRC 0622 / NRRL Y-65 / CBS 138) (Yeast), this protein is Mitochondrial escape protein 2 (YME2).